We begin with the raw amino-acid sequence, 145 residues long: Oleosin L (145 aa).

The residue at position 2 (Ala2) is an N-acetylalanine. Helical transmembrane passes span 36–56 (GSLLVLSGLTLAGTVIALTIA) and 59–79 (LLVIFSPVLVPAVITIFLLGA). A Proline-knot motif is present at residues 58–69 (PLLVIFSPVLVP). Positions 123–132 (KAREMKDRAE) are enriched in basic and acidic residues. Positions 123 to 145 (KAREMKDRAEQFSQQPVAGSQTS) are disordered. The span at 133 to 145 (QFSQQPVAGSQTS) shows a compositional bias: polar residues.

This sequence belongs to the oleosin family. As to expression, expressed in seeds (at protein level).

It localises to the lipid droplet. The protein localises to the membrane. Its function is as follows. May have a structural role to stabilize the lipid body during desiccation of the seed by preventing coalescence of the oil. Probably interacts with both lipid and phospholipid moieties of lipid bodies. May also provide recognition signals for specific lipase anchorage in lipolysis during seedling growth. The protein is Oleosin L of Sesamum indicum (Oriental sesame).